The chain runs to 116 residues: MSWRGRSTYRPRPRRYVEPPEMIGPMLPEQFSDEVEPATPEEGEPATQRQDPAAAQEGEDEGASAGQGPKPEADSQEQVHPKTGCECGDGPDGQEMGLPNPEEVKRPEEGEKQSQC.

The disordered stretch occupies residues 1–116; it reads MSWRGRSTYR…PEEGEKQSQC (116 aa). Residues 31 to 44 show a composition bias toward acidic residues; that stretch reads FSDEVEPATPEEGE. Basic and acidic residues-rich tracts occupy residues 71–80 and 102–116; these read PEADSQEQVH and EEVK…QSQC.

The protein belongs to the GAGE family.

The chain is G antigen 10 (GAGE10) from Homo sapiens (Human).